The primary structure comprises 151 residues: Nucleoside diphosphate kinase (151 aa).

6 residues coordinate ATP: lysine 10, phenylalanine 58, arginine 86, threonine 92, arginine 103, and asparagine 113. Histidine 116 functions as the Pros-phosphohistidine intermediate in the catalytic mechanism.

It belongs to the NDK family. Homotetramer. Mg(2+) is required as a cofactor.

The protein localises to the cytoplasm. It carries out the reaction dZDP + ATP = dZTP + ADP. The catalysed reaction is a 2'-deoxyribonucleoside 5'-diphosphate + ATP = a 2'-deoxyribonucleoside 5'-triphosphate + ADP. The enzyme catalyses a ribonucleoside 5'-diphosphate + ATP = a ribonucleoside 5'-triphosphate + ADP. It participates in purine metabolism. Functionally, major role in the synthesis of nucleoside triphosphates other than ATP. The ATP gamma phosphate is transferred to the NDP beta phosphate via a ping-pong mechanism, using a phosphorylated active-site intermediate. Its function is as follows. (Microbial infection) Catalyzes the phosphorylation of dZDP to dZTP, when the bacterium is infected by a phage that produces the substrate for the synthesis of dZTP (2- amino-2'-deoxyadenosine 5'-triphosphate), which is then used by the phage as a DNA polymerase substrate. This Synechococcus sp. (strain CC9902) protein is Nucleoside diphosphate kinase.